Reading from the N-terminus, the 562-residue chain is Eukaryotic translation initiation factor 3 subunit L (562 aa).

Positions 1–29 are disordered; the sequence is MSHAKEDYDSSYDPYSYQADYDGHTGDPK. Low complexity predominate over residues 11–20; that stretch reads SYDPYSYQAD. One can recognise a PCI domain in the interval 329–535; sequence DSIRVFANIL…IHIADTKVAR (207 aa).

This sequence belongs to the eIF-3 subunit L family. As to quaternary structure, component of the eukaryotic translation initiation factor 3 (eIF-3) complex, which is composed of 13 subunits: eif3a, eif3b, eif3c, eif3d, eif3e, eif3f, eif3g, eif3h, eif3i, eif3j, eif3k, eif3l and eif3m.

The protein resides in the cytoplasm. In terms of biological role, component of the eukaryotic translation initiation factor 3 (eIF-3) complex, which is involved in protein synthesis of a specialized repertoire of mRNAs and, together with other initiation factors, stimulates binding of mRNA and methionyl-tRNAi to the 40S ribosome. The eIF-3 complex specifically targets and initiates translation of a subset of mRNAs involved in cell proliferation. This is Eukaryotic translation initiation factor 3 subunit L (eif3l) from Xenopus laevis (African clawed frog).